Reading from the N-terminus, the 121-residue chain is Large ribosomal subunit protein uL22 (121 aa).

Belongs to the universal ribosomal protein uL22 family. Part of the 50S ribosomal subunit.

In terms of biological role, this protein binds specifically to 23S rRNA; its binding is stimulated by other ribosomal proteins, e.g. L4, L17, and L20. It is important during the early stages of 50S assembly. It makes multiple contacts with different domains of the 23S rRNA in the assembled 50S subunit and ribosome. Functionally, the globular domain of the protein is located near the polypeptide exit tunnel on the outside of the subunit, while an extended beta-hairpin is found that lines the wall of the exit tunnel in the center of the 70S ribosome. This Hydrogenobaculum sp. (strain Y04AAS1) protein is Large ribosomal subunit protein uL22.